The following is a 458-amino-acid chain: Phosphoglucosamine mutase (458 aa).

The active-site Phosphoserine intermediate is the Ser-108. Residues Ser-108, Asp-247, Asp-249, and Asp-251 each contribute to the Mg(2+) site. At Ser-108 the chain carries Phosphoserine.

It belongs to the phosphohexose mutase family. Mg(2+) serves as cofactor. Post-translationally, activated by phosphorylation.

The catalysed reaction is alpha-D-glucosamine 1-phosphate = D-glucosamine 6-phosphate. Functionally, catalyzes the conversion of glucosamine-6-phosphate to glucosamine-1-phosphate. The protein is Phosphoglucosamine mutase of Nitrosomonas europaea (strain ATCC 19718 / CIP 103999 / KCTC 2705 / NBRC 14298).